A 57-amino-acid chain; its full sequence is Catalase-1 (57 aa).

Tyr-37 lines the heme pocket.

As to quaternary structure, homodimer. The cofactor is heme.

The catalysed reaction is 2 H2O2 = O2 + 2 H2O. In terms of biological role, decomposes hydrogen peroxide into water and oxygen; serves to protect cells from the toxic effects of hydrogen peroxide. This Comamonas terrigena protein is Catalase-1.